The sequence spans 157 residues: 2-C-methyl-D-erythritol 2,4-cyclodiphosphate synthase (157 aa).

A divalent metal cation contacts are provided by Asp8 and His10. Residues 8–10 (DVH) and 34–35 (HS) each bind 4-CDP-2-C-methyl-D-erythritol 2-phosphate. His42 is a binding site for a divalent metal cation. Residues 56 to 58 (DLG), 61 to 65 (FPDTD), 132 to 135 (TTTE), Phe139, and Arg142 each bind 4-CDP-2-C-methyl-D-erythritol 2-phosphate.

The protein belongs to the IspF family. As to quaternary structure, homotrimer. Requires a divalent metal cation as cofactor.

The enzyme catalyses 4-CDP-2-C-methyl-D-erythritol 2-phosphate = 2-C-methyl-D-erythritol 2,4-cyclic diphosphate + CMP. It functions in the pathway isoprenoid biosynthesis; isopentenyl diphosphate biosynthesis via DXP pathway; isopentenyl diphosphate from 1-deoxy-D-xylulose 5-phosphate: step 4/6. Functionally, involved in the biosynthesis of isopentenyl diphosphate (IPP) and dimethylallyl diphosphate (DMAPP), two major building blocks of isoprenoid compounds. Catalyzes the conversion of 4-diphosphocytidyl-2-C-methyl-D-erythritol 2-phosphate (CDP-ME2P) to 2-C-methyl-D-erythritol 2,4-cyclodiphosphate (ME-CPP) with a corresponding release of cytidine 5-monophosphate (CMP). The protein is 2-C-methyl-D-erythritol 2,4-cyclodiphosphate synthase of Salinibacter ruber (strain DSM 13855 / M31).